A 918-amino-acid polypeptide reads, in one-letter code: Serine/threonine-protein kinase D1 (918 aa).

A Phosphotyrosine modification is found at Tyr93. The Phorbol-ester/DAG-type 1 zinc-finger motif lies at 144 to 194; the sequence is PHALFVHSYRAPAFCDHCGEMLWGLVRQGLKCEGCGLNYHKRCAFKIPNNC. Phosphoserine occurs at positions 203, 206, 217, and 221. A Phorbol-ester/DAG-type 2 zinc finger spans residues 276–326; sequence PHTFVIHSYTRPTVCQFCKKLLKGLFRQGLQCKDCRFNCHKRCAPKVPNNC. 2 disordered regions span residues 338 to 362 and 380 to 408; these read SPGA…NSGL and EGQS…STSN. Composition is skewed to acidic residues over residues 345 to 355 and 387 to 396; these read VVMEEGSDDND and EMQDPDADQE. The residue at position 351 (Ser351) is a Phosphoserine. Phosphoserine; by MAPK13 is present on residues Ser403 and Ser407. In terms of domain architecture, PH spans 428 to 547; sequence TVMKEGWMVH…WEVAIQHALM (120 aa). A Phosphotyrosine modification is found at Tyr438. Position 454 is a phosphoserine (Ser454). Tyr469 carries the phosphotyrosine; by ABL modification. Position 508 is a phosphotyrosine (Tyr508). A Phosphoserine modification is found at Ser554. Residues 589–845 form the Protein kinase domain; the sequence is IFPDEVLGSG…VDKTLSHPWL (257 aa). ATP is bound by residues 595–603 and Lys618; that span reads LGSGQFGIV. Asp712 (proton acceptor) is an active-site residue. The residue at position 744 (Ser744) is a Phosphoserine; by PKC/PRKCD. At Ser748 the chain carries Phosphoserine; by autocatalysis and PKC/PRKCD. Tyr755 carries the phosphotyrosine modification. Phosphoserine; by autocatalysis is present on Ser916.

Belongs to the protein kinase superfamily. CAMK Ser/Thr protein kinase family. PKD subfamily. As to quaternary structure, interacts (via N-terminus) with ADAP1/CENTA1. Interacts with MAPK13. Interacts with DAPK1 in an oxidative stress-regulated manner. Interacts with USP28; the interaction induces phosphorylation of USP28 and activated KRAS-mediated stabilization of ZNF304. Interacts with AKAP13 (via C-terminal domain). Requires Mg(2+) as cofactor. Post-translationally, phosphorylated at Ser-403 and Ser-407 by MAPK13 during regulation of insulin secretion in pancreatic beta cells. Phosphorylated by DAPK1. Phosphorylated at Tyr-93 and by ABL at Tyr-469, which primes the kinase in response to oxidative stress, and promotes a second step activating phosphorylation at Ser-744/Ser-748 by PKRD. Phosphorylated on Ser-916 upon S.enterica infection in macrophages.

The protein localises to the cytoplasm. The protein resides in the cell membrane. It is found in the golgi apparatus. It localises to the trans-Golgi network. The catalysed reaction is L-seryl-[protein] + ATP = O-phospho-L-seryl-[protein] + ADP + H(+). It catalyses the reaction L-threonyl-[protein] + ATP = O-phospho-L-threonyl-[protein] + ADP + H(+). Activated by DAG and phorbol esters. Phorbol-ester/DAG-type domain 1 binds DAG with high affinity and appears to play the dominant role in mediating translocation to the cell membrane and trans-Golgi network. Phorbol-ester/DAG-type domain 2 binds phorbol ester with higher affinity. Autophosphorylation of Ser-748 and phosphorylation of Ser-744 by PKC relieves auto-inhibition by the PH domain. Phosphorylation on Tyr-469 by the SRC-ABL1 pathway in response to oxidative stress, is also required for activation. Activated by DAPK1 under oxidative stress. In terms of biological role, serine/threonine-protein kinase that converts transient diacylglycerol (DAG) signals into prolonged physiological effects downstream of PKC, and is involved in the regulation of MAPK8/JNK1 and Ras signaling, Golgi membrane integrity and trafficking, cell survival through NF-kappa-B activation, cell migration, cell differentiation by mediating HDAC7 nuclear export, cell proliferation via MAPK1/3 (ERK1/2) signaling, and plays a role in cardiac hypertrophy, VEGFA-induced angiogenesis, genotoxic-induced apoptosis and flagellin-stimulated inflammatory response. Phosphorylates the epidermal growth factor receptor (EGFR) on dual threonine residues, which leads to the suppression of epidermal growth factor (EGF)-induced MAPK8/JNK1 activation and subsequent JUN phosphorylation. Phosphorylates RIN1, inducing RIN1 binding to 14-3-3 proteins YWHAB, YWHAE and YWHAZ and increased competition with RAF1 for binding to GTP-bound form of Ras proteins (NRAS, HRAS and KRAS). Acts downstream of the heterotrimeric G-protein beta/gamma-subunit complex to maintain the structural integrity of the Golgi membranes, and is required for protein transport along the secretory pathway. In the trans-Golgi network (TGN), regulates the fission of transport vesicles that are on their way to the plasma membrane. May act by activating the lipid kinase phosphatidylinositol 4-kinase beta (PI4KB) at the TGN for the local synthesis of phosphorylated inositol lipids, which induces a sequential production of DAG, phosphatidic acid (PA) and lyso-PA (LPA) that are necessary for membrane fission and generation of specific transport carriers to the cell surface. Under oxidative stress, is phosphorylated at Tyr-469 via SRC-ABL1 and contributes to cell survival by activating IKK complex and subsequent nuclear translocation and activation of NFKB1. Involved in cell migration by regulating integrin alpha-5/beta-3 recycling and promoting its recruitment in newly forming focal adhesion. In osteoblast differentiation, mediates the bone morphogenetic protein 2 (BMP2)-induced nuclear export of HDAC7, which results in the inhibition of HDAC7 transcriptional repression of RUNX2. In neurons, plays an important role in neuronal polarity by regulating the biogenesis of TGN-derived dendritic vesicles, and is involved in the maintenance of dendritic arborization and Golgi structure in hippocampal cells. May potentiate mitogenesis induced by the neuropeptide bombesin or vasopressin by mediating an increase in the duration of MAPK1/3 (ERK1/2) signaling, which leads to accumulation of immediate-early gene products including FOS that stimulate cell cycle progression. Plays an important role in the proliferative response induced by low calcium in keratinocytes, through sustained activation of MAPK1/3 (ERK1/2) pathway. Downstream of novel PKC signaling, plays a role in cardiac hypertrophy by phosphorylating HDAC5, which in turn triggers XPO1/CRM1-dependent nuclear export of HDAC5, MEF2A transcriptional activation and induction of downstream target genes that promote myocyte hypertrophy and pathological cardiac remodeling. Mediates cardiac troponin I (TNNI3) phosphorylation at the PKA sites, which results in reduced myofilament calcium sensitivity, and accelerated crossbridge cycling kinetics. The PRKD1-HDAC5 pathway is also involved in angiogenesis by mediating VEGFA-induced specific subset of gene expression, cell migration, and tube formation. In response to VEGFA, is necessary and required for HDAC7 phosphorylation which induces HDAC7 nuclear export and endothelial cell proliferation and migration. During apoptosis induced by cytarabine and other genotoxic agents, PRKD1 is cleaved by caspase-3 at Asp-378, resulting in activation of its kinase function and increased sensitivity of cells to the cytotoxic effects of genotoxic agents. In epithelial cells, is required for transducing flagellin-stimulated inflammatory responses by binding and phosphorylating TLR5, which contributes to MAPK14/p38 activation and production of inflammatory cytokines. Acts as an activator of NLRP3 inflammasome assembly by mediating phosphorylation of NLRP3. May play a role in inflammatory response by mediating activation of NF-kappa-B. May be involved in pain transmission by directly modulating TRPV1 receptor. Plays a role in activated KRAS-mediated stabilization of ZNF304 in colorectal cancer (CRC) cells. Regulates nuclear translocation of transcription factor TFEB in macrophages upon live S.enterica infection. This Rattus norvegicus (Rat) protein is Serine/threonine-protein kinase D1 (Prkd1).